The following is a 254-amino-acid chain: MSAADKDPDKHSADADPPLTVELLADLQAGLLDDATAARIRSRVRSDPQAQQILRALNRVRRDVAAMGADPAWGPAARPAVVDSISAALRSARPNSSPGAAHAARPHVHPVRMIAGAAGLCAVATAIGVGAVVDAPPPAPSAPTTAQHITVSKPAPVIPLSRPQVLDLLHHTPDYGPPGGPLGDPSRRTSCLSGLGYPASTPVLGAQPIDIDARPAVLLVIPADTPDKLAVFAVAPHCSAADTGLLASTVVPRA.

The Cytoplasmic portion of the chain corresponds to 1–112 (MSAADKDPDK…AARPHVHPVR (112 aa)). Residues 113-133 (MIAGAAGLCAVATAIGVGAVV) form a helical membrane-spanning segment. Residues 134–254 (DAPPPAPSAP…LLASTVVPRA (121 aa)) lie on the Extracellular side of the membrane.

In terms of assembly, interacts with ECF RNA polymerase sigma factor SigM; this should inhibit the interaction of SigM with the RNA polymerase catalytic core. In terms of processing, probably cleaved within the membrane by Rip1 near the cytoplasmic membrane interface.

Its subcellular location is the cell membrane. Its function is as follows. An anti-sigma factor for extracytoplasmic function (ECF) sigma factor SigM. ECF sigma factors are held in an inactive form by an anti-sigma factor until released by regulated intramembrane proteolysis (RIP). RIP occurs when an extracytoplasmic signal triggers a concerted proteolytic cascade to transmit information and elicit cellular responses. The membrane-spanning regulatory substrate protein is first cut extracytoplasmically (site-1 protease, S1P), then within the membrane itself (site-2 protease, S2P, Rip1), while cytoplasmic proteases finish degrading the regulatory protein, liberating the sigma factor. This chain is Anti-sigma-M factor RsmA (rsmA), found in Mycobacterium tuberculosis (strain ATCC 35801 / TMC 107 / Erdman).